Here is a 295-residue protein sequence, read N- to C-terminus: Defective in cullin neddylation protein 1 (295 aa).

Positions 8–45 (QKTKLRQFVQWTQVTEAVSLNFLAKANWNIEYAMTLYF) constitute a UBA-like domain. In terms of domain architecture, DCUN1 spans 60–272 (VDRSNIERLF…LIDQFVDYCR (213 aa)).

Interacts with the cullin cul-3. Interacts with ubiquitin via its UBA-like domain. Interacts with ned-8/nedd8.

It is found in the nucleus. Required for neddylation of cullin components of SCF-type E3 ubiquitin ligase complexes. Neddylation of cullins play an essential role in the regulation of SCF-type complexes activity. Does not act by preventing deneddylation, but rather facilitates neddylation, possibly by acting with rbx-1 to recruit the Nedd8-charged E2 enzyme to the cullin component of SCF-type complexes. This is Defective in cullin neddylation protein 1 (dcn-1) from Caenorhabditis elegans.